A 292-amino-acid polypeptide reads, in one-letter code: Small ribosomal subunit biogenesis GTPase RsgA (292 aa).

The CP-type G domain maps to 64-221 (RSELFRPAVA…LVDTPGFSSL (158 aa)). Residues 113-116 (NKMD) and 164-172 (GPSGVGKST) each bind GTP. Zn(2+) contacts are provided by Cys-245, Cys-250, His-252, and Cys-258.

Belongs to the TRAFAC class YlqF/YawG GTPase family. RsgA subfamily. In terms of assembly, monomer. Associates with 30S ribosomal subunit, binds 16S rRNA. Zn(2+) serves as cofactor.

It is found in the cytoplasm. Its function is as follows. One of several proteins that assist in the late maturation steps of the functional core of the 30S ribosomal subunit. Helps release RbfA from mature subunits. May play a role in the assembly of ribosomal proteins into the subunit. Circularly permuted GTPase that catalyzes slow GTP hydrolysis, GTPase activity is stimulated by the 30S ribosomal subunit. In Clostridium botulinum (strain Loch Maree / Type A3), this protein is Small ribosomal subunit biogenesis GTPase RsgA.